The primary structure comprises 237 residues: Purine nucleoside phosphorylase DeoD-type (237 aa).

H4 contacts a purine D-ribonucleoside. Residues G20, R24, R43, and 87 to 90 (RVGT) each bind phosphate. A purine D-ribonucleoside-binding positions include 179–181 (EME) and 203–204 (SD). D204 functions as the Proton donor in the catalytic mechanism.

This sequence belongs to the PNP/UDP phosphorylase family. In terms of assembly, homohexamer; trimer of homodimers.

The enzyme catalyses a purine D-ribonucleoside + phosphate = a purine nucleobase + alpha-D-ribose 1-phosphate. The catalysed reaction is a purine 2'-deoxy-D-ribonucleoside + phosphate = a purine nucleobase + 2-deoxy-alpha-D-ribose 1-phosphate. In terms of biological role, catalyzes the reversible phosphorolytic breakdown of the N-glycosidic bond in the beta-(deoxy)ribonucleoside molecules, with the formation of the corresponding free purine bases and pentose-1-phosphate. The sequence is that of Purine nucleoside phosphorylase DeoD-type from Streptococcus uberis (strain ATCC BAA-854 / 0140J).